Here is a 106-residue protein sequence, read N- to C-terminus: Iron-sulfur cluster assembly protein CyaY (106 aa).

The protein belongs to the frataxin family.

Functionally, involved in iron-sulfur (Fe-S) cluster assembly. May act as a regulator of Fe-S biogenesis. This chain is Iron-sulfur cluster assembly protein CyaY, found in Escherichia coli O6:H1 (strain CFT073 / ATCC 700928 / UPEC).